The sequence spans 443 residues: ATP-dependent protease ATPase subunit HslU (443 aa).

ATP is bound by residues Ile-18, 60–65 (GVGKTE), Asp-256, Glu-321, and Arg-393.

Belongs to the ClpX chaperone family. HslU subfamily. A double ring-shaped homohexamer of HslV is capped on each side by a ring-shaped HslU homohexamer. The assembly of the HslU/HslV complex is dependent on binding of ATP.

The protein resides in the cytoplasm. Its function is as follows. ATPase subunit of a proteasome-like degradation complex; this subunit has chaperone activity. The binding of ATP and its subsequent hydrolysis by HslU are essential for unfolding of protein substrates subsequently hydrolyzed by HslV. HslU recognizes the N-terminal part of its protein substrates and unfolds these before they are guided to HslV for hydrolysis. The sequence is that of ATP-dependent protease ATPase subunit HslU from Nitrosospira multiformis (strain ATCC 25196 / NCIMB 11849 / C 71).